We begin with the raw amino-acid sequence, 610 residues long: UvrABC system protein C (610 aa).

The region spanning 16–94 (SQPGVYRMYD…IKLYQPRYNV (79 aa)) is the GIY-YIG domain. The UVR domain occupies 204–239 (DQVLTQLIARMEKASQDLAFEEAARIRDQIQAVRRV).

This sequence belongs to the UvrC family. In terms of assembly, interacts with UvrB in an incision complex.

Its subcellular location is the cytoplasm. Functionally, the UvrABC repair system catalyzes the recognition and processing of DNA lesions. UvrC both incises the 5' and 3' sides of the lesion. The N-terminal half is responsible for the 3' incision and the C-terminal half is responsible for the 5' incision. This chain is UvrABC system protein C, found in Salmonella typhimurium (strain LT2 / SGSC1412 / ATCC 700720).